Reading from the N-terminus, the 396-residue chain is Obg-like ATPase 1 (396 aa).

The region spanning 23-283 is the OBG-type G domain; sequence LKIGIVGLPN…LSAEERQKYL (261 aa). 32–37 lines the ATP pocket; it reads NVGKST. Mg(2+) is bound by residues Ser-36 and Thr-56. Leu-231 is a binding site for ATP. The Nuclear export signal signature appears at 267–274; sequence LELKLQEL. Position 294 is an N6-acetyllysine (Lys-294). The region spanning 304-387 is the TGS domain; that stretch reads QLEYFFTAGP…EDGDIIFFKF (84 aa).

This sequence belongs to the TRAFAC class OBG-HflX-like GTPase superfamily. OBG GTPase family. YchF/OLA1 subfamily. In terms of assembly, monomer. Mg(2+) serves as cofactor.

It is found in the cytoplasm. It localises to the nucleus. The protein resides in the nucleolus. Its function is as follows. Hydrolyzes ATP, and can also hydrolyze GTP with lower efficiency. Has lower affinity for GTP. The protein is Obg-like ATPase 1 of Pongo abelii (Sumatran orangutan).